Consider the following 934-residue polypeptide: Rab GTPase-activating protein tbc-11 (934 aa).

A PID domain is found at 16–134; it reads VQYLGCSQLV…SKAETAAKAL (119 aa). The tract at residues 337 to 383 is disordered; sequence FISLESDSDRKRSKQNLGKSPSRMPTQLLHPTGDDESDCDEPLLSGS. The span at 351–361 shows a compositional bias: polar residues; sequence QNLGKSPSRMP. Positions 422 to 612 constitute a Rab-GAP TBC domain; the sequence is GIPDKLRGRV…FILDLFLSQG (191 aa). 2 coiled-coil regions span residues 727–800 and 861–895; these read KIEL…YKKL and LEER…LTHQ.

Functionally, rab GTPase activating protein for the small GTPases rab-6.1 and rab-6.2. Probably acts through rab-6.1 and rab-6.2 to play a role in microRNA-mediated gene silencing in different tissue types. Required for seam cell division and alae formation. This Caenorhabditis elegans protein is Rab GTPase-activating protein tbc-11.